A 338-amino-acid chain; its full sequence is Histidinol-phosphate aminotransferase (338 aa).

Lys204 carries the N6-(pyridoxal phosphate)lysine modification.

The protein belongs to the class-II pyridoxal-phosphate-dependent aminotransferase family. Histidinol-phosphate aminotransferase subfamily. Pyridoxal 5'-phosphate serves as cofactor.

The catalysed reaction is L-histidinol phosphate + 2-oxoglutarate = 3-(imidazol-4-yl)-2-oxopropyl phosphate + L-glutamate. It participates in amino-acid biosynthesis; L-histidine biosynthesis; L-histidine from 5-phospho-alpha-D-ribose 1-diphosphate: step 7/9. In Pyrococcus furiosus (strain ATCC 43587 / DSM 3638 / JCM 8422 / Vc1), this protein is Histidinol-phosphate aminotransferase.